We begin with the raw amino-acid sequence, 701 residues long: Protein UL29/UL28 (701 aa).

A disordered region spans residues 1 to 33; sequence MSGRRKGCSAATASSSSSSPPSRLPPLPGHARR.

Belongs to the herpesviridae US22 family. Interacts with UL38 and host HDAC1; these interactions are necessary for the HDAC1 interaction with UL38. Interacts with host MTA2.

It is found in the virion. Its subcellular location is the host nucleus. The protein resides in the host cytoplasm. Its function is as follows. Contributes to activation of immediate-early gene expression. The polypeptide is Protein UL29/UL28 (UL29) (Homo sapiens (Human)).